Consider the following 311-residue polypeptide: Meteorin-like protein (311 aa).

Positions 1-45 are cleaved as a signal peptide; it reads MRGVVWAARRRAGQQWPRSPGPGPGPPPPPPLLLLLLLLLGGASA. Residues Cys-52 and Cys-75 are joined by a disulfide bond. Asn-103 carries N-linked (GlcNAc...) asparagine glycosylation. 4 disulfide bridges follow: Cys-107–Cys-143, Cys-188–Cys-260, Cys-191–Cys-284, and Cys-201–Cys-306.

This sequence belongs to the meteorin family. As to expression, abundantly expressed in adipose tissue.

It localises to the secreted. Its function is as follows. Hormone induced following exercise or cold exposure that promotes energy expenditure. Induced either in the skeletal muscle after exercise or in adipose tissue following cold exposure and is present in the circulation. Able to stimulate energy expenditure associated with the browning of the white fat depots and improves glucose tolerance. Does not promote an increase in a thermogenic gene program via direct action on adipocytes, but acts by stimulating several immune cell subtypes to enter the adipose tissue and activate their prothermogenic actions. Stimulates an eosinophil-dependent increase in IL4 expression and promotes alternative activation of adipose tissue macrophages, which are required for the increased expression of the thermogenic and anti-inflammatory gene programs in fat. Required for some cold-induced thermogenic responses, suggesting a role in metabolic adaptations to cold temperatures. This Rattus norvegicus (Rat) protein is Meteorin-like protein (Metrnl).